Here is a 400-residue protein sequence, read N- to C-terminus: Cell division protein FtsZ 2 (400 aa).

Residues 1–16 (MQDIVREAMERDEAER) are compositionally biased toward basic and acidic residues. The tract at residues 1–30 (MQDIVREAMERDEAERQTQSSLEDSDDQFG) is disordered. Residues 41 to 45 (GAGNN), 128 to 130 (GTG), Glu-159, Arg-162, and Asp-205 each bind GTP. Residues 338–400 (VLGPSTQKQA…EKNNGLDVIR (63 aa)) are disordered. A compositionally biased stretch (low complexity) spans 352–364 (QSIQSRESQQQHS). Over residues 365–382 (GSEFDSSERAQTAQSGTW) the composition is skewed to polar residues. Over residues 385-400 (GGRDEVEKNNGLDVIR) the composition is skewed to basic and acidic residues.

Belongs to the FtsZ family. In terms of assembly, homodimer. Polymerizes to form a dynamic ring structure in a strictly GTP-dependent manner. Interacts directly with several other division proteins. Interacts with SepF.

Its subcellular location is the cytoplasm. In terms of biological role, essential cell division protein that forms a contractile ring structure (Z ring) at the future cell division site. The regulation of the ring assembly controls the timing and the location of cell division. One of the functions of the FtsZ ring is to recruit other cell division proteins to the septum to produce a new cell wall between the dividing cells. Binds GTP and shows GTPase activity. Required for division ring constriction. The protein is Cell division protein FtsZ 2 of Haloferax volcanii (strain ATCC 29605 / DSM 3757 / JCM 8879 / NBRC 14742 / NCIMB 2012 / VKM B-1768 / DS2) (Halobacterium volcanii).